Consider the following 564-residue polypeptide: Solute carrier family 22 member 21 (564 aa).

The Cytoplasmic portion of the chain corresponds to 1–20 (MLDYDEVTAFLGEWGTFQRL). The helical transmembrane segment at 21–41 (IFFLLSASIIPNGFTGLSAVF) threads the bilayer. Topologically, residues 42–142 (LTAIPEHRCR…DLVCKDDWKA (101 aa)) are extracellular. N-linked (GlcNAc...) asparagine glycans are attached at residues Asn-57, Asn-64, and Asn-91. The helical transmembrane segment at 143–163 (PLTTSFFYVGVLLGSFISGQL) threads the bilayer. Residues 164–172 (SDRFGRKNI) lie on the Cytoplasmic side of the membrane. The helical transmembrane segment at 173–193 (LFLTMAMHTGFSFIQVFSVNF) threads the bilayer. Topologically, residues 194-197 (EMFT) are extracellular. Residues 198 to 218 (LLYTLVGMGHISNYVAAFVLG) form a helical membrane-spanning segment. 218-225 (GTEMLSKS) contacts ATP. Topologically, residues 219-232 (TEMLSKSVRIIFAT) are cytoplasmic. The chain crosses the membrane as a helical span at residues 233-253 (LGVCIFFAFGFMVLPLFAYFI). The Extracellular segment spans residues 254–257 (REWR). The helical transmembrane segment at 258–278 (RLLLAITLPGVLCGALWWFIP) threads the bilayer. At 279-344 (ESPRWLISQG…YDLVRTPNIR (66 aa)) the chain is on the cytoplasmic side. A helical membrane pass occupies residues 345-365 (ILTIMSIILWLTISVGYFGLS). Residues 366-376 (LDTPNLNGNIY) lie on the Extracellular side of the membrane. The helical transmembrane segment at 377–397 (VNCFLLAAVEVPAYVLAWLLL) threads the bilayer. Residues 398–409 (QHVSRRYSMAGS) are Cytoplasmic-facing. Residues 410–430 (LFLGGSVLLLVQLVPSDLHYL) traverse the membrane as a helical segment. At 431 to 433 (STT) the chain is on the extracellular side. A helical membrane pass occupies residues 434 to 454 (LVMVGKFGITSAYSMVYVYTA). Residues 455 to 465 (ELYPTVVRNMG) lie on the Cytoplasmic side of the membrane. A helical membrane pass occupies residues 466–486 (VGVSSTASRLGSILSPYFVYL). At 487–491 (GAYDR) the chain is on the extracellular side. Residues 492 to 512 (RLPYILMGSLTILTAIITLFF) traverse the membrane as a helical segment. At 513-564 (PESSGVSLPETIDEMQKVKKLKQRQSLSKKGSPKESKGNVSRTSRTSEPKGF) the chain is on the cytoplasmic side. Positions 532–564 (KLKQRQSLSKKGSPKESKGNVSRTSRTSEPKGF) are disordered.

The protein belongs to the major facilitator (TC 2.A.1) superfamily. Organic cation transporter (TC 2.A.1.19) family. As to expression, predominantly expressed in testis.

Its subcellular location is the peroxisome membrane. Its function is as follows. Sodium-ion independent, medium affinity carnitine transporter. Also transports organic cations such as tetraethylammonium (TEA) without the involvement of sodium. Relative uptake activity ratio of carnitine to TEA is 746. The chain is Solute carrier family 22 member 21 (Slc22a21) from Mus musculus (Mouse).